Consider the following 326-residue polypeptide: Peroxidase 6 (326 aa).

The N-terminal stretch at 1 to 20 (MKSFGLCLFILVSSPCLLQA) is a signal peptide. N21 is a glycosylation site (N-linked (GlcNAc...) asparagine). Intrachain disulfides connect C31–C112, C64–C69, C118–C318, and C197–C228. H62 acts as the Proton acceptor in catalysis. Ca(2+)-binding residues include D63, V66, G68, D70, and S72. N163 carries N-linked (GlcNAc...) asparagine glycosylation. H190 contributes to the heme b binding site. T191 contributes to the Ca(2+) binding site. N-linked (GlcNAc...) asparagine glycosylation is found at N206 and N230. 3 residues coordinate Ca(2+): D242, T245, and D250. Residue N274 is glycosylated (N-linked (GlcNAc...) asparagine).

It belongs to the peroxidase family. Classical plant (class III) peroxidase subfamily. Heme b serves as cofactor. The cofactor is Ca(2+).

It localises to the secreted. The enzyme catalyses 2 a phenolic donor + H2O2 = 2 a phenolic radical donor + 2 H2O. Functionally, removal of H(2)O(2), oxidation of toxic reductants, biosynthesis and degradation of lignin, suberization, auxin catabolism, response to environmental stresses such as wounding, pathogen attack and oxidative stress. These functions might be dependent on each isozyme/isoform in each plant tissue. This chain is Peroxidase 6 (PER6), found in Arabidopsis thaliana (Mouse-ear cress).